The following is a 336-amino-acid chain: Glycerol-3-phosphate dehydrogenase [NAD(P)+] (336 aa).

NADPH contacts are provided by Ser14, Trp15, Arg35, Arg36, and Lys109. Positions 109 and 139 each coordinate sn-glycerol 3-phosphate. An NADPH-binding site is contributed by Ala143. The sn-glycerol 3-phosphate site is built by Lys194, Asp247, Ser257, Arg258, and Asn259. Lys194 functions as the Proton acceptor in the catalytic mechanism. Residue Arg258 participates in NADPH binding. Position 284 (Glu284) interacts with NADPH.

It belongs to the NAD-dependent glycerol-3-phosphate dehydrogenase family.

It localises to the cytoplasm. The catalysed reaction is sn-glycerol 3-phosphate + NAD(+) = dihydroxyacetone phosphate + NADH + H(+). It catalyses the reaction sn-glycerol 3-phosphate + NADP(+) = dihydroxyacetone phosphate + NADPH + H(+). The protein operates within membrane lipid metabolism; glycerophospholipid metabolism. Its function is as follows. Catalyzes the reduction of the glycolytic intermediate dihydroxyacetone phosphate (DHAP) to sn-glycerol 3-phosphate (G3P), the key precursor for phospholipid synthesis. This chain is Glycerol-3-phosphate dehydrogenase [NAD(P)+], found in Streptomyces griseus subsp. griseus (strain JCM 4626 / CBS 651.72 / NBRC 13350 / KCC S-0626 / ISP 5235).